We begin with the raw amino-acid sequence, 362 residues long: Peptide chain release factor 1 (362 aa).

Glutamine 237 carries the post-translational modification N5-methylglutamine.

The protein belongs to the prokaryotic/mitochondrial release factor family. Post-translationally, methylated by PrmC. Methylation increases the termination efficiency of RF1.

It localises to the cytoplasm. Peptide chain release factor 1 directs the termination of translation in response to the peptide chain termination codons UAG and UAA. This is Peptide chain release factor 1 from Vibrio parahaemolyticus serotype O3:K6 (strain RIMD 2210633).